Consider the following 156-residue polypeptide: Sensor histidine kinase component HK2 (156 aa).

Over 1-42 the chain is Extracellular; it reads MALVLAAAGAVTVVQFRDAAHEADPDGALRGLTDDITADLVR. The chain crosses the membrane as a helical span at residues 43 to 63; that stretch reads ELVTILPIVLVIAAVAAYLLS. Residues 64 to 120 enclose the HAMP domain; the sequence is RAALRPVDRIRAAAQTLTTTPHPDTDAPLPVPPTDDEIAWLATTLNTMLTRLQRALA. Residues 64-156 are Cytoplasmic-facing; it reads RAALRPVDRI…RCAGPDPPTS (93 aa). The Histidine kinase; first part domain occupies 128-156; the sequence is DASHELRTPLALLTTELELRCAGPDPPTS. Histidine 131 carries the phosphohistidine; by autocatalysis modification.

As to quaternary structure, homodimer. Each monomer interacts with HK1 and the receiver domain of TcrA. Phosphorylated by HK1.

Its subcellular location is the cell membrane. It carries out the reaction ATP + protein L-histidine = ADP + protein N-phospho-L-histidine.. In terms of biological role, member of the three-protein two-component system HK1/HK2/TcrA. HK2 transfers its phosphoryl group to TcrA. This chain is Sensor histidine kinase component HK2, found in Mycobacterium tuberculosis (strain ATCC 25618 / H37Rv).